We begin with the raw amino-acid sequence, 260 residues long: Type III pantothenate kinase (260 aa).

Residue 6–13 participates in ATP binding; that stretch reads DCGNTNTV. 107 to 110 is a binding site for substrate; sequence GPDR. Asp109 acts as the Proton acceptor in catalysis. Asp129 serves as a coordination point for K(+). Thr132 serves as a coordination point for ATP. Position 184 (Thr184) interacts with substrate.

The protein belongs to the type III pantothenate kinase family. As to quaternary structure, homodimer. The cofactor is NH4(+). K(+) serves as cofactor.

It localises to the cytoplasm. It carries out the reaction (R)-pantothenate + ATP = (R)-4'-phosphopantothenate + ADP + H(+). It participates in cofactor biosynthesis; coenzyme A biosynthesis; CoA from (R)-pantothenate: step 1/5. Functionally, catalyzes the phosphorylation of pantothenate (Pan), the first step in CoA biosynthesis. This chain is Type III pantothenate kinase, found in Ruegeria sp. (strain TM1040) (Silicibacter sp.).